The primary structure comprises 236 residues: Baculoviral IAP repeat-containing protein 8 (236 aa).

The BIR repeat unit spans residues 7–70 (WLITFGTWMY…KWYPGCKYLL (64 aa)). Cysteine 39, cysteine 42, histidine 59, and cysteine 66 together coordinate Zn(2+). The segment at 189 to 224 (CKICMDRHIAVVFIPCGHLVTCKQCAEAVDRCPMCN) adopts an RING-type zinc-finger fold.

It belongs to the IAP family. As to quaternary structure, binds to caspase-9.

Its subcellular location is the cytoplasm. Its function is as follows. Protects against apoptosis mediated by BAX. The polypeptide is Baculoviral IAP repeat-containing protein 8 (BIRC8) (Gorilla gorilla gorilla (Western lowland gorilla)).